We begin with the raw amino-acid sequence, 325 residues long: Elongation factor P--(R)-beta-lysine ligase (325 aa).

Residue 76–78 (SPE) participates in substrate binding. Residues 100–102 (RNE) and Asn109 each bind ATP. Position 118 (Tyr118) interacts with substrate. ATP is bound at residue 244–245 (EL). Glu251 contributes to the substrate binding site. Gly300 is a binding site for ATP.

Belongs to the class-II aminoacyl-tRNA synthetase family. EpmA subfamily. In terms of assembly, homodimer.

It carries out the reaction D-beta-lysine + L-lysyl-[protein] + ATP = N(6)-((3R)-3,6-diaminohexanoyl)-L-lysyl-[protein] + AMP + diphosphate + H(+). Its function is as follows. With EpmB is involved in the beta-lysylation step of the post-translational modification of translation elongation factor P (EF-P). Catalyzes the ATP-dependent activation of (R)-beta-lysine produced by EpmB, forming a lysyl-adenylate, from which the beta-lysyl moiety is then transferred to the epsilon-amino group of a conserved specific lysine residue in EF-P. This Pectobacterium carotovorum subsp. carotovorum (strain PC1) protein is Elongation factor P--(R)-beta-lysine ligase.